The chain runs to 196 residues: Agamous-like MADS-box protein AGL27 (196 aa).

The 61-residue stretch at 1–61 (MGRRKIEIKR…GKLYDSSSGD (61 aa)) folds into the MADS-box domain. The 91-residue stretch at 80–170 (ALDLEEKIQN…ASQMGKNTLL (91 aa)) folds into the K-box domain. The interval 175 to 196 (ERGMFPGSSSGNKIPETLPLLN) is disordered.

Interacts with AGL39, AGL97 and AGL74. As to expression, expressed in most plant tissues, embryo, seedlings, roots, leaves, stems, inflorescence, pollen, siliques and flowers.

It is found in the nucleus. In terms of biological role, probable transcription factor involved in the negative regulation of flowering time in both long and short days, probably through the photoperiodic and vernalization pathways. Prevents premature flowering. The chain is Agamous-like MADS-box protein AGL27 (AGL27) from Arabidopsis thaliana (Mouse-ear cress).